The sequence spans 251 residues: 5-oxoprolinase subunit A 3 (251 aa).

The protein belongs to the LamB/PxpA family. Forms a complex composed of PxpA, PxpB and PxpC.

It carries out the reaction 5-oxo-L-proline + ATP + 2 H2O = L-glutamate + ADP + phosphate + H(+). Catalyzes the cleavage of 5-oxoproline to form L-glutamate coupled to the hydrolysis of ATP to ADP and inorganic phosphate. The protein is 5-oxoprolinase subunit A 3 of Pseudomonas aeruginosa (strain ATCC 15692 / DSM 22644 / CIP 104116 / JCM 14847 / LMG 12228 / 1C / PRS 101 / PAO1).